The sequence spans 653 residues: Large subunit GTPase 1 homolog (653 aa).

The interval 1–31 (MGRRRAPAGGSLGRALMRHQTQRSRSHRHTD) is disordered. Residues 16-28 (LMRHQTQRSRSHR) are compositionally biased toward basic residues. A phosphoserine mark is found at S93 and S97. The 282-residue stretch at 164 to 445 (WRQLWRVIER…LCDCPGLVMP (282 aa)) folds into the CP-type G domain. 212–215 (NKAD) contacts GTP. Residues 251 to 358 (DSEEEANKDD…RKTPQKRQLH (108 aa)) are disordered. A Phosphoserine modification is found at S252. Basic and acidic residues predominate over residues 258-288 (KDDRQSNTAEFEHSSFDEAEISHSETEHLPA). The segment covering 299–333 (TTDEDDSEYEDCPEEEEDDWQTCSEEDGPEEEDCG) has biased composition (acidic residues). GTP contacts are provided by residues 394-401 (GYPNVGKS) and 438-441 (DCPG). Residues 630–653 (SENGAGKPWKKHGNRNKKEKSCRL) are disordered. Positions 637 to 647 (PWKKHGNRNKK) are enriched in basic residues.

This sequence belongs to the TRAFAC class YlqF/YawG GTPase family. LSG1 subfamily.

Its subcellular location is the cytoplasm. It localises to the endoplasmic reticulum. The protein resides in the nucleus. It is found in the cajal body. The enzyme catalyses GTP + H2O = GDP + phosphate + H(+). In terms of biological role, functions as a GTPase. May act by mediating the release of NMD3 from the 60S ribosomal subunit after export into the cytoplasm during the 60S ribosomal subunit maturation. This Macaca fascicularis (Crab-eating macaque) protein is Large subunit GTPase 1 homolog.